The sequence spans 68 residues: DNA-directed RNA polymerase subunit omega (68 aa).

This sequence belongs to the RNA polymerase subunit omega family. As to quaternary structure, the RNAP catalytic core consists of 2 alpha, 1 beta, 1 beta' and 1 omega subunit. When a sigma factor is associated with the core the holoenzyme is formed, which can initiate transcription.

It carries out the reaction RNA(n) + a ribonucleoside 5'-triphosphate = RNA(n+1) + diphosphate. Functionally, promotes RNA polymerase assembly. Latches the N- and C-terminal regions of the beta' subunit thereby facilitating its interaction with the beta and alpha subunits. This chain is DNA-directed RNA polymerase subunit omega, found in Citrifermentans bemidjiense (strain ATCC BAA-1014 / DSM 16622 / JCM 12645 / Bem) (Geobacter bemidjiensis).